We begin with the raw amino-acid sequence, 331 residues long: tRNA-cytidine(32) 2-sulfurtransferase (331 aa).

The PP-loop motif motif lies at 73-78; it reads SGGKDS. Cysteine 148, cysteine 151, and cysteine 239 together coordinate [4Fe-4S] cluster.

The protein belongs to the TtcA family. Homodimer. The cofactor is Mg(2+). [4Fe-4S] cluster is required as a cofactor.

It is found in the cytoplasm. It carries out the reaction cytidine(32) in tRNA + S-sulfanyl-L-cysteinyl-[cysteine desulfurase] + AH2 + ATP = 2-thiocytidine(32) in tRNA + L-cysteinyl-[cysteine desulfurase] + A + AMP + diphosphate + H(+). Its pathway is tRNA modification. Its function is as follows. Catalyzes the ATP-dependent 2-thiolation of cytidine in position 32 of tRNA, to form 2-thiocytidine (s(2)C32). The sulfur atoms are provided by the cysteine/cysteine desulfurase (IscS) system. This Burkholderia mallei (strain NCTC 10247) protein is tRNA-cytidine(32) 2-sulfurtransferase.